A 93-amino-acid chain; its full sequence is Aspartyl/glutamyl-tRNA(Asn/Gln) amidotransferase subunit C (93 aa).

It belongs to the GatC family. As to quaternary structure, heterotrimer of A, B and C subunits.

The enzyme catalyses L-glutamyl-tRNA(Gln) + L-glutamine + ATP + H2O = L-glutaminyl-tRNA(Gln) + L-glutamate + ADP + phosphate + H(+). It catalyses the reaction L-aspartyl-tRNA(Asn) + L-glutamine + ATP + H2O = L-asparaginyl-tRNA(Asn) + L-glutamate + ADP + phosphate + 2 H(+). Its function is as follows. Allows the formation of correctly charged Asn-tRNA(Asn) or Gln-tRNA(Gln) through the transamidation of misacylated Asp-tRNA(Asn) or Glu-tRNA(Gln) in organisms which lack either or both of asparaginyl-tRNA or glutaminyl-tRNA synthetases. The reaction takes place in the presence of glutamine and ATP through an activated phospho-Asp-tRNA(Asn) or phospho-Glu-tRNA(Gln). The chain is Aspartyl/glutamyl-tRNA(Asn/Gln) amidotransferase subunit C from Methanothrix thermoacetophila (strain DSM 6194 / JCM 14653 / NBRC 101360 / PT) (Methanosaeta thermophila).